Reading from the N-terminus, the 472-residue chain is Divalent metal cation transporter MntH (472 aa).

The next 11 helical transmembrane spans lie at 59–79 (LLAF…PGNW), 92–112 (MLLS…ALAA), 136–156 (LALW…EVIG), 167–187 (VPII…LLLM), 196–216 (AFVI…IVLA), 233–253 (VVAD…TVMP), 288–308 (LALM…AAVF), 325–345 (LLAP…ALLA), 377–397 (VLTR…YGEQ), 402–422 (LLLL…IPLL), and 439–459 (WLMV…VKLL).

This sequence belongs to the NRAMP family.

The protein localises to the cell inner membrane. H(+)-stimulated, divalent metal cation uptake system. In Xylella fastidiosa (strain 9a5c), this protein is Divalent metal cation transporter MntH.